Here is a 457-residue protein sequence, read N- to C-terminus: Cysteine--tRNA ligase (457 aa).

C28 contacts Zn(2+). The 'HIGH' region motif lies at 30–40; sequence PTVYDTAHIGN. C212, H237, and E241 together coordinate Zn(2+). The 'KMSKS' region signature appears at 270-274; the sequence is KMSKS. Residue K273 coordinates ATP.

The protein belongs to the class-I aminoacyl-tRNA synthetase family. In terms of assembly, monomer. The cofactor is Zn(2+).

It localises to the cytoplasm. The catalysed reaction is tRNA(Cys) + L-cysteine + ATP = L-cysteinyl-tRNA(Cys) + AMP + diphosphate. This chain is Cysteine--tRNA ligase, found in Wolbachia sp. subsp. Drosophila simulans (strain wRi).